The following is a 74-amino-acid chain: ATP synthase subunit 9, mitochondrial (74 aa).

2 helical membrane-spanning segments follow: residues 8-28 (IGAG…GLIF) and 50-70 (ILGF…AFLI).

It belongs to the ATPase C chain family. As to quaternary structure, F-type ATPases have 2 components, CF(1) - the catalytic core - and CF(0) - the membrane proton channel. CF(1) has five subunits: alpha(3), beta(3), gamma(1), delta(1), epsilon(1). CF(0) has three main subunits: a, b and c.

It localises to the mitochondrion membrane. In terms of biological role, mitochondrial membrane ATP synthase (F(1)F(0) ATP synthase or Complex V) produces ATP from ADP in the presence of a proton gradient across the membrane which is generated by electron transport complexes of the respiratory chain. F-type ATPases consist of two structural domains, F(1) - containing the extramembraneous catalytic core and F(0) - containing the membrane proton channel, linked together by a central stalk and a peripheral stalk. During catalysis, ATP synthesis in the catalytic domain of F(1) is coupled via a rotary mechanism of the central stalk subunits to proton translocation. Part of the complex F(0) domain. A homomeric c-ring of probably 10 subunits is part of the complex rotary element. The sequence is that of ATP synthase subunit 9, mitochondrial (atp9) from Schizosaccharomyces pombe (strain 972 / ATCC 24843) (Fission yeast).